Reading from the N-terminus, the 174-residue chain is Crossover junction endodeoxyribonuclease RuvC (174 aa).

Active-site residues include D8, E68, and D140. Residues D8, E68, and D140 each coordinate Mg(2+).

The protein belongs to the RuvC family. Homodimer which binds Holliday junction (HJ) DNA. The HJ becomes 2-fold symmetrical on binding to RuvC with unstacked arms; it has a different conformation from HJ DNA in complex with RuvA. In the full resolvosome a probable DNA-RuvA(4)-RuvB(12)-RuvC(2) complex forms which resolves the HJ. Mg(2+) serves as cofactor.

It localises to the cytoplasm. The catalysed reaction is Endonucleolytic cleavage at a junction such as a reciprocal single-stranded crossover between two homologous DNA duplexes (Holliday junction).. Functionally, the RuvA-RuvB-RuvC complex processes Holliday junction (HJ) DNA during genetic recombination and DNA repair. Endonuclease that resolves HJ intermediates. Cleaves cruciform DNA by making single-stranded nicks across the HJ at symmetrical positions within the homologous arms, yielding a 5'-phosphate and a 3'-hydroxyl group; requires a central core of homology in the junction. The consensus cleavage sequence is 5'-(A/T)TT(C/G)-3'. Cleavage occurs on the 3'-side of the TT dinucleotide at the point of strand exchange. HJ branch migration catalyzed by RuvA-RuvB allows RuvC to scan DNA until it finds its consensus sequence, where it cleaves and resolves the cruciform DNA. The chain is Crossover junction endodeoxyribonuclease RuvC from Legionella pneumophila (strain Corby).